The primary structure comprises 186 residues: uncharacterized protein (186 aa).

2 CBS domains span residues 10–69 and 77–133; these read IMKK…KLPP and ISSG…IIST.

This is an uncharacterized protein from Methanocaldococcus jannaschii (strain ATCC 43067 / DSM 2661 / JAL-1 / JCM 10045 / NBRC 100440) (Methanococcus jannaschii).